The sequence spans 162 residues: Nucleotide-binding protein SGR_2909 (162 aa).

The protein belongs to the YajQ family.

Nucleotide-binding protein. This chain is Nucleotide-binding protein SGR_2909, found in Streptomyces griseus subsp. griseus (strain JCM 4626 / CBS 651.72 / NBRC 13350 / KCC S-0626 / ISP 5235).